We begin with the raw amino-acid sequence, 545 residues long: CTP synthase (545 aa).

The tract at residues 1–266 (MTTRYIFVTG…DELVIKRFNI (266 aa)) is amidoligase domain. S14 provides a ligand contact to CTP. S14 provides a ligand contact to UTP. Residues 15–20 (SLGKGI) and D72 contribute to the ATP site. D72 and E140 together coordinate Mg(2+). CTP is bound by residues 147-149 (DIE), 187-192 (KTKPTQ), and K223. UTP contacts are provided by residues 187 to 192 (KTKPTQ) and K223. Position 239–241 (239–241 (KDV)) interacts with ATP. The 252-residue stretch at 291 to 542 (TIGMVGKYIE…IAASLSHQKR (252 aa)) folds into the Glutamine amidotransferase type-1 domain. An L-glutamine-binding site is contributed by G352. Residue C379 is the Nucleophile; for glutamine hydrolysis of the active site. L-glutamine-binding positions include 380-383 (LGMQ), E403, and R470. Active-site residues include H515 and E517.

Belongs to the CTP synthase family. As to quaternary structure, homotetramer.

It catalyses the reaction UTP + L-glutamine + ATP + H2O = CTP + L-glutamate + ADP + phosphate + 2 H(+). The enzyme catalyses L-glutamine + H2O = L-glutamate + NH4(+). It carries out the reaction UTP + NH4(+) + ATP = CTP + ADP + phosphate + 2 H(+). It participates in pyrimidine metabolism; CTP biosynthesis via de novo pathway; CTP from UDP: step 2/2. Its activity is regulated as follows. Allosterically activated by GTP, when glutamine is the substrate; GTP has no effect on the reaction when ammonia is the substrate. The allosteric effector GTP functions by stabilizing the protein conformation that binds the tetrahedral intermediate(s) formed during glutamine hydrolysis. Inhibited by the product CTP, via allosteric rather than competitive inhibition. Functionally, catalyzes the ATP-dependent amination of UTP to CTP with either L-glutamine or ammonia as the source of nitrogen. Regulates intracellular CTP levels through interactions with the four ribonucleotide triphosphates. This is CTP synthase from Shewanella denitrificans (strain OS217 / ATCC BAA-1090 / DSM 15013).